Here is a 334-residue protein sequence, read N- to C-terminus: Nucleoid-associated protein YejK (334 aa).

The protein belongs to the YejK family.

The protein localises to the cytoplasm. It is found in the nucleoid. The polypeptide is Nucleoid-associated protein YejK (Escherichia fergusonii (strain ATCC 35469 / DSM 13698 / CCUG 18766 / IAM 14443 / JCM 21226 / LMG 7866 / NBRC 102419 / NCTC 12128 / CDC 0568-73)).